Here is a 187-residue protein sequence, read N- to C-terminus: Resolvase OPG149 (187 aa).

It belongs to the RuvC family. Poxviruses-type subfamily. It depends on Mg(2+) as a cofactor.

Functionally, plays a role in DNA replication by cleaving viral DNA concatamers to yield unit-length viral genomes. The concatamer junctions contain inverted repeat sequences that can be extruded as cruciforms, yielding Holliday junctions that A22 protein cleaves. The polypeptide is Resolvase OPG149 (OPG149) (Cynomys gunnisoni (Gunnison's prairie dog)).